Reading from the N-terminus, the 349-residue chain is GMP reductase (349 aa).

An NADP(+)-binding site is contributed by leucine 108–alanine 131. Positions 181 and 183 each coordinate K(+). The active-site Thioimidate intermediate is cysteine 186. Isoleucine 216–valine 239 is a binding site for NADP(+).

This sequence belongs to the IMPDH/GMPR family. GuaC type 1 subfamily. Homotetramer.

It carries out the reaction IMP + NH4(+) + NADP(+) = GMP + NADPH + 2 H(+). Functionally, catalyzes the irreversible NADPH-dependent deamination of GMP to IMP. It functions in the conversion of nucleobase, nucleoside and nucleotide derivatives of G to A nucleotides, and in maintaining the intracellular balance of A and G nucleotides. The sequence is that of GMP reductase from Buchnera aphidicola subsp. Schizaphis graminum (strain Sg).